Consider the following 261-residue polypeptide: Putative hydro-lyase SH0274 (261 aa).

The protein belongs to the D-glutamate cyclase family.

This Staphylococcus haemolyticus (strain JCSC1435) protein is Putative hydro-lyase SH0274.